A 172-amino-acid polypeptide reads, in one-letter code: C-phycocyanin beta subunit (172 aa).

N72 is modified (N4-methylasparagine). The (2R,3E)-phycocyanobilin site is built by C82 and C153.

The protein belongs to the phycobiliprotein family. As to quaternary structure, heterodimer of an alpha and a beta chain, which further assembles into trimers. The trimers assemble into hexamers, although these were not seen in the crystallographic studies. Part of 2 PBS rod complexes, the conventional CpcG-PBS rod and a photosystem I-specific CpcL-PBS rod, both of which include ferredoxin--NADP reductase (petH). Interacts with rod linker CpcC2 via the latter's N-terminal PBS-linker domain. Post-translationally, contains two covalently linked bilin chromophores.

It is found in the cellular thylakoid membrane. In terms of biological role, light-harvesting photosynthetic bile pigment-protein from the phycobiliprotein complex (phycobilisome, PBS). Phycocyanin is the major phycobiliprotein in the PBS rod. This Synechocystis sp. (strain ATCC 27184 / PCC 6803 / Kazusa) protein is C-phycocyanin beta subunit (cpcB).